A 281-amino-acid polypeptide reads, in one-letter code: uncharacterized protein (281 aa).

Positions 242-281 (IDKQSRKKNIIREINDIKSKINDLSNYMDNLISELDDLFD) form a coiled coil.

This is an uncharacterized protein from Acanthamoeba polyphaga (Amoeba).